We begin with the raw amino-acid sequence, 1020 residues long: 26S proteasome non-ATPase regulatory subunit 1 (1020 aa).

The interval 279-322 (TALPSTFKPQGTTSEDGAKSEGDKSKSDEDITEETPADDKVERT) is disordered. Positions 281-293 (LPSTFKPQGTTSE) are enriched in polar residues. A Phosphothreonine modification is found at T291. The segment covering 294–307 (DGAKSEGDKSKSDE) has biased composition (basic and acidic residues). Residues S298, S303, and S305 each carry the phosphoserine modification. T310 is subject to Phosphothreonine. PC repeat units follow at residues 418–452 (TATASLGVIHRGHEKDSLALMQSYLPKEAGPSSGY), 456–489 (GALYALGLIHANHGANIIDYLLQQLKDAQNENVR), 491–525 (GGCLGLGLAGMGTHRQDLYEQLKFNLYQDDAVTGE), 526–560 (AAGIAMGMVMLGSKNAQAIEDMVSYAQETQHEKIL), 562–595 (GLAVGISLTMFSRLEEADPLVTSLSSDKDPVLRR), 596–631 (SGMYTIAMAYNGTGSNKAIRKLLHVAVSDVNDDVRR), 632–664 (AAVTAIGFILFRSPEQCPSVVSLLAESYNPHVR), 666–701 (GAAMALGIACAGTGLREAIALLEPMVKFDPVNFVRQ), 702–742 (GALI…DVMA), and 745–777 (GAILAQGIIDAGGRNATLSLQSRTGHTNLQAVV). Disordered regions lie at residues 855 to 950 (QKRR…NPAR) and 999 to 1020 (FGPMNDEEKEPEPPEPFEYIED). Basic and acidic residues-rich tracts occupy residues 858–867 (RENADKKEDE) and 876–939 (KEGA…KEPE). Over residues 1003–1020 (NDEEKEPEPPEPFEYIED) the composition is skewed to acidic residues.

The protein belongs to the proteasome subunit S1 family.

Acts as a regulatory subunit of the 26S proteasome which is involved in the ATP-dependent degradation of ubiquitinated proteins. This Drosophila melanogaster (Fruit fly) protein is 26S proteasome non-ATPase regulatory subunit 1 (Rpn2).